The chain runs to 1222 residues: Serine/threonine-protein kinase WNK4 (1222 aa).

A compositionally biased stretch (polar residues) spans 1–17 (MLAPRNTETGVPMSQTE). Residues 1 to 165 (MLAPRNTETG…DTETQAVATS (165 aa)) are disordered. A compositionally biased stretch (low complexity) spans 90–101 (AGPTRSPPSSSK). Ser95 carries the post-translational modification Phosphoserine. Basic and acidic residues predominate over residues 135 to 152 (EPPRVPDAAARERRREQE). Residues Lys154 and Lys172 each participate in a glycyl lysine isopeptide (Lys-Gly) (interchain with G-Cter in ubiquitin) cross-link. One can recognise a Protein kinase domain in the interval 171-429 (LKFDIEIGRG…IQDLLAHAFF (259 aa)). Ser181 is an ATP binding site. Glycyl lysine isopeptide (Lys-Gly) (interchain with G-Cter in ubiquitin) cross-links involve residues Lys183, Lys223, and Lys238. ATP is bound by residues 251–254 (TELM) and Lys301. Asp318 functions as the Proton acceptor in the catalytic mechanism. Lys325 participates in a covalent cross-link: Glycyl lysine isopeptide (Lys-Gly) (interchain with G-Cter in ubiquitin). Ser328 and Ser332 each carry phosphoserine; by autocatalysis. Residues Lys384, Lys390, Lys447, and Lys451 each participate in a glycyl lysine isopeptide (Lys-Gly) (interchain with G-Cter in ubiquitin) cross-link. The segment at 525 to 562 (RELEVLPPDSGPPPATVSLAPGPPSAFPPEPEEPEADQ) is disordered. The segment covering 533–553 (DSGPPPATVSLAPGPPSAFPP) has biased composition (pro residues). The interval 554 to 564 (EPEEPEADQHQ) is interaction with KLHL3. Ser572 carries the phosphoserine modification. Disordered stretches follow at residues 626-659 (RSGPGSDFSPGDSYASDAASGLSDMGEGGQMRKN), 747-809 (DAGP…GAPF), 877-896 (SYPQDPLSPTSLPVCPSPPS), and 927-976 (SPGL…AQPL). Low complexity-rich tracts occupy residues 627 to 638 (SGPGSDFSPGDS), 757 to 769 (ALSPQEEPAALPA), 793 to 807 (STSPSSPGTPLSPGA), and 877 to 890 (SYPQDPLSPTSLPV). Pro residues predominate over residues 935 to 944 (PPAPPGPLPS). A compositionally biased stretch (polar residues) spans 953–963 (DQESLSAQTAE). Residue Lys990 forms a Glycyl lysine isopeptide (Lys-Gly) (interchain with G-Cter in ubiquitin) linkage. Positions 996–999 (RFQV) match the RFXV motif motif. A disordered region spans residues 1000-1087 (TSSKEPAEPP…SSPILSHPSP (88 aa)). Phosphoserine is present on Ser1014. Low complexity predominate over residues 1014 to 1032 (SPTLSRSLKLPSPPLTSES). Residues 1044 to 1056 (ETREALAESDRAA) are compositionally biased toward basic and acidic residues. Residues Lys1123, Lys1136, and Lys1137 each participate in a glycyl lysine isopeptide (Lys-Gly) (interchain with G-Cter in ubiquitin) cross-link. The disordered stretch occupies residues 1166-1222 (RRLSKGSFPTSRRNSLQRSDLPGPGIMRRNSLSGSSTGSQEQRASKGVTFAGDIGRM). Composition is skewed to polar residues over residues 1172 to 1183 (SFPTSRRNSLQR) and 1195 to 1207 (NSLSGSSTGSQEQ). Ser1196 bears the Phosphoserine mark.

It belongs to the protein kinase superfamily. Ser/Thr protein kinase family. WNK subfamily. Interacts with the C-terminal region of KCNJ1. Interacts with WNK1 and WNK3. Interacts with KLHL3. Requires Mg(2+) as cofactor. Autophosphorylated at Ser-328 and Ser-332, promoting its activation. Phosphorylated by WNK1 and WNK3. Phosphorylated at Ser-572 in a MAP3K15/ASK3-dependent process in response to osmotic stress or hypotonic low-chloride stimulation. Post-translationally, ubiquitinated by the BCR(KLHL3) complex, leading to its degradation. Also ubiquitinated by the BCR(KLHL2) complex. Locates to the distal convoluted tubule, the medullary collecting duct and the cortical collecting duct of the kidney. Expressed in pancreatic duct.

The protein localises to the cell junction. It localises to the tight junction. It carries out the reaction L-seryl-[protein] + ATP = O-phospho-L-seryl-[protein] + ADP + H(+). The catalysed reaction is L-threonyl-[protein] + ATP = O-phospho-L-threonyl-[protein] + ADP + H(+). Its activity is regulated as follows. Activation requires autophosphorylation of Ser-328 and Ser-332. Autophosphorylation and subsequent activation is inhibited by increases in intracellular ionic strength: Cl(-) potently inhibits WNK4 kinase activity via direct binding. Also inhibited by K(+) ions. In terms of biological role, serine/threonine-protein kinase component of the WNK4-SPAK/OSR1 kinase cascade, which acts as a key regulator of ion transport in the distal nephron and blood pressure. The WNK4-SPAK/OSR1 kinase cascade is composed of WNK4, which mediates phosphorylation and activation of downstream kinases OXSR1/OSR1 and STK39/SPAK. Following activation, OXSR1/OSR1 and STK39/SPAK catalyze phosphorylation of ion cotransporters, such as SLC12A1/NKCC2, SLC12A2/NKCC1, SLC12A3/NCC, SLC12A5/KCC2 or SLC12A6/KCC3, regulating their activity. Acts as a molecular switch that regulates the balance between renal salt reabsorption and K(+) secretion by modulating the activities of renal transporters and channels, including the Na-Cl cotransporter SLC12A3/NCC and the K(+) channel, KCNJ1/ROMK. Regulates NaCl reabsorption in the distal nephron by activating the thiazide-sensitive Na-Cl cotransporter SLC12A3/NCC in distal convoluted tubule cells of kidney: activates SLC12A3/NCC in a OXSR1/OSR1- and STK39/SPAK-dependent process. Also acts as a scaffold protein independently of its protein kinase activity: negatively regulates cell membrane localization of various transporters and channels (CFTR, KCNJ1/ROMK, SLC4A4, SLC26A9 and TRPV4) by clathrin-dependent endocytosis. Also inhibits the activity of the epithelial Na(+) channel (ENaC) SCNN1A, SCNN1B, SCNN1D in a inase-independent mechanism. May also phosphorylate NEDD4L. The sequence is that of Serine/threonine-protein kinase WNK4 from Mus musculus (Mouse).